The chain runs to 154 residues: uncharacterized protein (154 aa).

The region spanning 14 to 146 (AMNLYRVFAR…LIVLLKKAGI (133 aa)) is the HTH marR-type domain. Residues 60-83 (LQQIGSRLLLVSGNVTYVIDKLER) constitute a DNA-binding region (H-T-H motif).

This is an uncharacterized protein from Bacillus subtilis (strain 168).